The primary structure comprises 103 residues: Large ribosomal subunit protein bL21 (103 aa).

Belongs to the bacterial ribosomal protein bL21 family. In terms of assembly, part of the 50S ribosomal subunit. Contacts protein L20.

Functionally, this protein binds to 23S rRNA in the presence of protein L20. The polypeptide is Large ribosomal subunit protein bL21 (Mycolicibacterium smegmatis (strain ATCC 700084 / mc(2)155) (Mycobacterium smegmatis)).